An 85-amino-acid chain; its full sequence is Kunitz-type serine protease inhibitor homolog beta-bungarotoxin B3 chain (85 aa).

The first 24 residues, 1 to 24, serve as a signal peptide directing secretion; sequence MSSGGLLLLLGLLTLWAELTPVSS. Positions 31–81 constitute a BPTI/Kunitz inhibitor domain; sequence CDKPPDTRICQTVVRAFYYKPSEKRCVQFRYGGCKGNGNHFKSDHLCRCEC. Intrachain disulfides connect Cys31–Cys81, Cys40–Cys64, and Cys56–Cys77.

It belongs to the venom Kunitz-type family. As to quaternary structure, heterodimer; disulfide-linked. The A chain has phospholipase A2 activity and the B chain shows homology with the basic protease inhibitors. As to expression, expressed by the venom gland.

It localises to the secreted. Functionally, beta-bungarotoxin is a presynaptic neurotoxin of the venom. The B chain is homologous to venom basic protease inhibitors but has no protease inhibitor activity and is non-toxic. This chain is Kunitz-type serine protease inhibitor homolog beta-bungarotoxin B3 chain, found in Bungarus candidus (Malayan krait).